Reading from the N-terminus, the 229-residue chain is Ribonuclease 3 (229 aa).

Positions 5-127 constitute an RNase III domain; sequence LSRLERQLGY…LIGAIYLDAG (123 aa). Glu-40 serves as a coordination point for Mg(2+). Residue Asp-44 is part of the active site. Mg(2+) contacts are provided by Asp-113 and Glu-116. Glu-116 is a catalytic residue. In terms of domain architecture, DRBM spans 154 to 224; the sequence is DPKTRLQEFL…AAAALIALGV (71 aa).

The protein belongs to the ribonuclease III family. As to quaternary structure, homodimer. Mg(2+) is required as a cofactor.

The protein localises to the cytoplasm. It catalyses the reaction Endonucleolytic cleavage to 5'-phosphomonoester.. Functionally, digests double-stranded RNA. Involved in the processing of primary rRNA transcript to yield the immediate precursors to the large and small rRNAs (23S and 16S). Processes some mRNAs, and tRNAs when they are encoded in the rRNA operon. Processes pre-crRNA and tracrRNA of type II CRISPR loci if present in the organism. This chain is Ribonuclease 3, found in Pseudomonas syringae pv. syringae (strain B728a).